The sequence spans 154 residues: Large ribosomal subunit protein uL22 (154 aa).

Belongs to the universal ribosomal protein uL22 family. As to quaternary structure, part of the 50S ribosomal subunit.

Its function is as follows. This protein binds specifically to 23S rRNA. It makes multiple contacts with different domains of the 23S rRNA in the assembled 50S subunit and ribosome. Functionally, the globular domain of the protein is located near the polypeptide exit tunnel on the outside of the subunit, while an extended beta-hairpin is found that lines the wall of the exit tunnel in the center of the 70S ribosome. This Methanosphaera stadtmanae (strain ATCC 43021 / DSM 3091 / JCM 11832 / MCB-3) protein is Large ribosomal subunit protein uL22.